Reading from the N-terminus, the 183-residue chain is D-glycero-alpha-D-manno-heptose-1,7-bisphosphate 7-phosphatase (183 aa).

Zn(2+)-binding residues include Cys-93, His-95, Cys-108, and Cys-110.

It belongs to the GmhB family.

It localises to the cytoplasm. It carries out the reaction D-glycero-alpha-D-manno-heptose 1,7-bisphosphate + H2O = D-glycero-alpha-D-manno-heptose 1-phosphate + phosphate. It participates in nucleotide-sugar biosynthesis; GDP-D-glycero-alpha-D-manno-heptose biosynthesis; GDP-D-glycero-alpha-D-manno-heptose from D-glycero-alpha-D-manno-heptose 7-phosphate: step 2/3. In terms of biological role, converts the D-glycero-alpha-D-manno-heptose 1,7-bisphosphate intermediate into D-glycero-alpha-D-manno-heptose 1-phosphate by removing the phosphate group at the C-7 position. The protein is D-glycero-alpha-D-manno-heptose-1,7-bisphosphate 7-phosphatase (gmhB2) of Photorhabdus laumondii subsp. laumondii (strain DSM 15139 / CIP 105565 / TT01) (Photorhabdus luminescens subsp. laumondii).